The primary structure comprises 575 residues: Alpha-(1,6)-fucosyltransferase (575 aa).

The Cytoplasmic segment spans residues 1-9 (MRPWTGSWR). The helical; Signal-anchor for type II membrane protein transmembrane segment at 10 to 30 (WIMLILFAWGTLLFYIGGHLV) threads the bilayer. At 31–575 (RDNDHPDHSS…KYPTYPEAEK (545 aa)) the chain is on the lumenal side. Disulfide bonds link Cys-204–Cys-266, Cys-212–Cys-230, and Cys-218–Cys-222. One can recognise a GT23 domain in the interval 206-493 (KAKKLVCNIN…PDASANFHSL (288 aa)). Ser-278 bears the Phosphoserine mark. Positions 299 to 305 (PRPPYLP) match the SH3-binding motif. The tract at residues 365–366 (RR) is important for donor substrate binding. A disulfide bridge links Cys-465 with Cys-472. The 62-residue stretch at 502–563 (QNAHNQIAIY…PSYKVREKIE (62 aa)) folds into the SH3 domain.

The protein belongs to the glycosyltransferase 23 family. Tyrosine phosphorylated by PKDCC/VLK.

It localises to the golgi apparatus. It is found in the golgi stack membrane. It carries out the reaction N(4)-{beta-D-GlcNAc-(1-&gt;2)-alpha-D-Man-(1-&gt;3)-[beta-D-GlcNAc-(1-&gt;2)-alpha-D-Man-(1-&gt;6)]-beta-D-Man-(1-&gt;4)-beta-D-GlcNAc-(1-&gt;4)-beta-D-GlcNAc}-L-asparaginyl-[protein] + GDP-beta-L-fucose = an N(4)-{beta-D-GlcNAc-(1-&gt;2)-alpha-D-Man-(1-&gt;3)-[beta-D-GlcNAc-(1-&gt;2)-alpha-D-Man-(1-&gt;6)]-beta-D-Man-(1-&gt;4)-beta-D-GlcNAc-(1-&gt;4)-[alpha-L-Fuc-(1-&gt;6)]-beta-D-GlcNAc}-L-asparaginyl-[protein] + GDP + H(+). The protein operates within protein modification; protein glycosylation. Its function is as follows. Catalyzes the addition of fucose in alpha 1-6 linkage to the first GlcNAc residue, next to the peptide chains in N-glycans. This is Alpha-(1,6)-fucosyltransferase (FUT8) from Canis lupus familiaris (Dog).